Reading from the N-terminus, the 278-residue chain is Tropomyosin A (278 aa).

Positions 1–270 (IMMAMKLEKE…YRAISGELDT (270 aa)) form a coiled coil. Residues 92-134 (DFEQSSGRLTETSTKLDDASKAAEESERNRKTLETRSISDDER) form a disordered region. The span at 95-104 (QSSGRLTETS) shows a compositional bias: polar residues. The segment covering 105–134 (TKLDDASKAAEESERNRKTLETRSISDDER) has biased composition (basic and acidic residues).

The protein belongs to the tropomyosin family. Homodimer.

In terms of biological role, tropomyosin, in association with the troponin complex, plays a central role in the calcium dependent regulation of muscle contraction. This chain is Tropomyosin A, found in Echinococcus granulosus (Hydatid tapeworm).